Consider the following 373-residue polypeptide: MMAAKREHADCGAEPARKRVKENYKRVTGKLLSKMTISLENHLYYTFTFRLLNENKTEAYYGNLQCFKDLVEQECYDVSLNFVKTKYNERIEINEYSKCDAAIDENVAVKLCLTRADFENEEIVNVLAKLKCVFKRLGANNYKMVFDINMQDAGGAVFVQQVECFANLKVLASAAKAFVKSPDNFNSLMDFYYKNTNTLFYVHGVRCQHTSKGQNEFLNWTAGPSTSLETPSNTDNEDYINLVHSHSTNNISRANKHLKSMQLSLFKAEQKINDNGKHSFSVQFKTLDSMDDDDDTKWHKCVYYVDSNGNKEDPNDTNAVQKLAMDFDQLATCLADKLTKATIFVTADNADASTMNLLGLLKHDDEECEYQFL.

Belongs to the baculoviridae LEF-3 family. In terms of assembly, interacts with alkaline nuclease.

The protein localises to the host nucleus. Its function is as follows. Required for late and very late gene expression. Lef-3 could be a single-stranded DNA-binding protein. The sequence is that of Late expression factor 3 (LEF-3) from Orgyia pseudotsugata (Douglas-fir tussock moth).